The primary structure comprises 271 residues: MMIHGFQSSHQDFSFGPWKLTASKTHIMKSADVEKLADELHMPSLPEMMFGDNVLRIQHGSGFGIEFNATDALRCVNNYQGMLKVACAEEWQESRTEGEHSKEVIKPYDWTYTTDYKGTLLGESLKLKVVPTTDHIDTEKLKAREQIKFFEEVLLFEDELHDHGVSSLSVKIRVMPSSFFLLLRFFLRIDGVLIRMNDTRLYHEADKTYMLREYTSRESKIANLMHVPPSLFTEPNEISQYLPIKEAVCEKLVFPERIDPNPVDSQSTPSE.

At Lys106 the chain carries N6-acetyllysine. The tract at residues 173–271 (RVMPSSFFLL…PVDSQSTPSE (99 aa)) is interaction with PPP2CA. Phosphoserine is present on residues Ser265 and Ser270.

The protein belongs to the TIP41 family. In terms of assembly, interacts with PPP2CA. Interacts with PPP2CB, PPP4C and PPP6C. Interacts with IGBP1; the interaction is dependent on PPP2CA. Associates with a protein phosphatase 2A PP2A(C):IGBP1 complex. Interacts with PPP4C and PPP4R2.

It is found in the cytoplasm. Functionally, may be a allosteric regulator of serine/threonine-protein phosphatase 2A (PP2A). Inhibits catalytic activity of the PP2A(D) core complex in vitro. The PP2A(C):TIPRL complex does not show phosphatase activity. Acts as a negative regulator of serine/threonine-protein phosphatase 4 probably by inhibiting the formation of the active PPP4C:PPP4R2 complex; the function is proposed to implicate it in DNA damage response by promoting H2AX phosphorylated on Ser-140 (gamma-H2AX). May play a role in the regulation of ATM/ATR signaling pathway controlling DNA replication and repair. This Mus musculus (Mouse) protein is TIP41-like protein (Tiprl).